A 222-amino-acid polypeptide reads, in one-letter code: UPF0758 protein Cpar_0627 (222 aa).

The region spanning 100–222 (KIQGAQDVFE…WFSFRDHSLL (123 aa)) is the MPN domain. Zn(2+)-binding residues include histidine 171, histidine 173, and aspartate 184. The JAMM motif signature appears at 171–184 (HNHPSGDVQPSNAD).

Belongs to the UPF0758 family.

This chain is UPF0758 protein Cpar_0627, found in Chlorobaculum parvum (strain DSM 263 / NCIMB 8327) (Chlorobium vibrioforme subsp. thiosulfatophilum).